Here is a 304-residue protein sequence, read N- to C-terminus: 33 kDa chaperonin (304 aa).

2 disulfides stabilise this stretch: Cys245–Cys247 and Cys278–Cys281.

This sequence belongs to the HSP33 family. In terms of processing, under oxidizing conditions two disulfide bonds are formed involving the reactive cysteines. Under reducing conditions zinc is bound to the reactive cysteines and the protein is inactive.

It is found in the cytoplasm. Its function is as follows. Redox regulated molecular chaperone. Protects both thermally unfolding and oxidatively damaged proteins from irreversible aggregation. Plays an important role in the bacterial defense system toward oxidative stress. This Microcystis aeruginosa (strain NIES-843 / IAM M-2473) protein is 33 kDa chaperonin.